Reading from the N-terminus, the 172-residue chain is Crossover junction endodeoxyribonuclease RuvC (172 aa).

Active-site residues include Asp-11, Glu-71, and Asp-143. The Mg(2+) site is built by Asp-11, Glu-71, and Asp-143.

This sequence belongs to the RuvC family. In terms of assembly, homodimer which binds Holliday junction (HJ) DNA. The HJ becomes 2-fold symmetrical on binding to RuvC with unstacked arms; it has a different conformation from HJ DNA in complex with RuvA. In the full resolvosome a probable DNA-RuvA(4)-RuvB(12)-RuvC(2) complex forms which resolves the HJ. The cofactor is Mg(2+).

Its subcellular location is the cytoplasm. It catalyses the reaction Endonucleolytic cleavage at a junction such as a reciprocal single-stranded crossover between two homologous DNA duplexes (Holliday junction).. In terms of biological role, the RuvA-RuvB-RuvC complex processes Holliday junction (HJ) DNA during genetic recombination and DNA repair. Endonuclease that resolves HJ intermediates. Cleaves cruciform DNA by making single-stranded nicks across the HJ at symmetrical positions within the homologous arms, yielding a 5'-phosphate and a 3'-hydroxyl group; requires a central core of homology in the junction. The consensus cleavage sequence is 5'-(A/T)TT(C/G)-3'. Cleavage occurs on the 3'-side of the TT dinucleotide at the point of strand exchange. HJ branch migration catalyzed by RuvA-RuvB allows RuvC to scan DNA until it finds its consensus sequence, where it cleaves and resolves the cruciform DNA. In Brucella anthropi (strain ATCC 49188 / DSM 6882 / CCUG 24695 / JCM 21032 / LMG 3331 / NBRC 15819 / NCTC 12168 / Alc 37) (Ochrobactrum anthropi), this protein is Crossover junction endodeoxyribonuclease RuvC.